The primary structure comprises 516 residues: Adenine DNA glycosylase (516 aa).

Residues 1 to 23 are compositionally biased toward basic residues; the sequence is MKKLRASVRSHKKQPANHKRRGK. A disordered region spans residues 1–38; it reads MKKLRASVRSHKKQPANHKRRGKCALSSSQAKPSGLDG. The active-site Proton donor/acceptor is Glu105. 4 residues coordinate [4Fe-4S] cluster: Cys261, Cys268, Cys271, and Cys277. In terms of domain architecture, Nudix hydrolase spans 335 to 467; it reads PREEYSATCV…AMKKVFRVYE (133 aa). A Nudix box motif is present at residues 376–398; that stretch reads VTLEPSGQHQHKALLQELQHWSA. The interval 474–516 is disordered; that stretch reads CKGSKRPQVCTPSSRKKPSRGQQVLDRFFQRHIPTHKPNSTTQ.

It belongs to the Nth/MutY family. The cofactor is [4Fe-4S] cluster. In terms of tissue distribution, expressed in brain, spleen, heart, liver and kidney.

It is found in the nucleus. Its subcellular location is the mitochondrion. The enzyme catalyses Hydrolyzes free adenine bases from 7,8-dihydro-8-oxoguanine:adenine mismatched double-stranded DNA, leaving an apurinic site.. Functionally, involved in oxidative DNA damage repair. Initiates repair of A*oxoG to C*G by removing the inappropriately paired adenine base from the DNA backbone. Possesses both adenine and 2-OH-A DNA glycosylase activities. This is Adenine DNA glycosylase (Mutyh) from Rattus norvegicus (Rat).